The chain runs to 277 residues: Undecaprenyl-diphosphatase (277 aa).

The next 5 helical transmembrane spans lie at Phe83–Ser103, Leu109–Ile129, Ala188–Val208, Ala218–Val238, and Tyr256–Ala276.

This sequence belongs to the UppP family.

It localises to the cell inner membrane. It catalyses the reaction di-trans,octa-cis-undecaprenyl diphosphate + H2O = di-trans,octa-cis-undecaprenyl phosphate + phosphate + H(+). Functionally, catalyzes the dephosphorylation of undecaprenyl diphosphate (UPP). Confers resistance to bacitracin. The polypeptide is Undecaprenyl-diphosphatase (Janthinobacterium sp. (strain Marseille) (Minibacterium massiliensis)).